The sequence spans 607 residues: WD repeat-containing protein 1-B (607 aa).

13 WD repeats span residues 4–45 (EIKK…IRNI), 48–87 (PAIA…IWDT), 93–135 (LLKY…LWDT), 138–176 (SVGE…FFEG), 180–218 (KFKF…LYDG), 224–263 (VCSL…IWDV), 270–306 (TTFN…YLDK), 311–351 (KPFR…YWDA), 358–408 (TFTG…KMDV), 432–474 (LKDK…LYSI), 480–518 (KDEG…VFSV), 523–561 (SEHN…VWTL), and 566–604 (TRIK…QWTV).

This sequence belongs to the WD repeat AIP1 family.

Its subcellular location is the cell membrane. The protein localises to the cytoplasm. It is found in the cytoskeleton. It localises to the nucleus. Its function is as follows. Induces disassembly of actin filaments in conjunction with ADF/cofilin family proteins. Doesn't sever actin filaments alone, but caps the barbed ends of filaments severed by cofilin, which blocks annealing and depolymerization and allows more extensive severing by cofilin. The sequence is that of WD repeat-containing protein 1-B (wdr1-b) from Xenopus laevis (African clawed frog).